A 214-amino-acid chain; its full sequence is A-type ATP synthase subunit D (214 aa).

It belongs to the V-ATPase D subunit family. Has multiple subunits with at least A(3), B(3), C, D, E, F, H, I and proteolipid K(x).

The protein localises to the cell membrane. Component of the A-type ATP synthase that produces ATP from ADP in the presence of a proton gradient across the membrane. The sequence is that of A-type ATP synthase subunit D from Pyrococcus abyssi (strain GE5 / Orsay).